The chain runs to 690 residues: UvrABC system protein C (690 aa).

Residues 1–60 (MTTDSSDPAKPAGPGQPPGSGADTRPGGLATGQDVDPATIETDEDDEARLPDVPDEPTDA) form a disordered region. The segment covering 41–58 (ETDEDDEARLPDVPDEPT) has biased composition (acidic residues). The region spanning 82–160 (TSPGVYRMMN…IKQLRPRFNV (79 aa)) is the GIY-YIG domain. The UVR domain maps to 270–305 (RAVKEELAREMEKASGDLAFERAALYRDRLAALSAI).

It belongs to the UvrC family. Interacts with UvrB in an incision complex.

It localises to the cytoplasm. In terms of biological role, the UvrABC repair system catalyzes the recognition and processing of DNA lesions. UvrC both incises the 5' and 3' sides of the lesion. The N-terminal half is responsible for the 3' incision and the C-terminal half is responsible for the 5' incision. The polypeptide is UvrABC system protein C (Nitrobacter hamburgensis (strain DSM 10229 / NCIMB 13809 / X14)).